A 500-amino-acid polypeptide reads, in one-letter code: Aspartyl/glutamyl-tRNA(Asn/Gln) amidotransferase subunit B (500 aa).

This sequence belongs to the GatB/GatE family. GatB subfamily. Heterotrimer of A, B and C subunits.

The enzyme catalyses L-glutamyl-tRNA(Gln) + L-glutamine + ATP + H2O = L-glutaminyl-tRNA(Gln) + L-glutamate + ADP + phosphate + H(+). The catalysed reaction is L-aspartyl-tRNA(Asn) + L-glutamine + ATP + H2O = L-asparaginyl-tRNA(Asn) + L-glutamate + ADP + phosphate + 2 H(+). Its function is as follows. Allows the formation of correctly charged Asn-tRNA(Asn) or Gln-tRNA(Gln) through the transamidation of misacylated Asp-tRNA(Asn) or Glu-tRNA(Gln) in organisms which lack either or both of asparaginyl-tRNA or glutaminyl-tRNA synthetases. The reaction takes place in the presence of glutamine and ATP through an activated phospho-Asp-tRNA(Asn) or phospho-Glu-tRNA(Gln). In Brucella melitensis biotype 2 (strain ATCC 23457), this protein is Aspartyl/glutamyl-tRNA(Asn/Gln) amidotransferase subunit B.